A 576-amino-acid polypeptide reads, in one-letter code: Arginine--tRNA ligase (576 aa).

The short motif at 122 to 132 (PNVAKQMHVGH) is the 'HIGH' region element.

This sequence belongs to the class-I aminoacyl-tRNA synthetase family. Monomer.

The protein resides in the cytoplasm. It catalyses the reaction tRNA(Arg) + L-arginine + ATP = L-arginyl-tRNA(Arg) + AMP + diphosphate. The sequence is that of Arginine--tRNA ligase from Yersinia enterocolitica serotype O:8 / biotype 1B (strain NCTC 13174 / 8081).